Consider the following 533-residue polypeptide: Heterogeneous nuclear ribonucleoprotein Q (533 aa).

An N-acetylalanine modification is found at Ala2. Ser69 carries the phosphoserine modification. RRM domains are found at residues 72–151 (TEIF…ISVA), 153–235 (NRLF…WADP), and 248–318 (KVLF…FAKP). Lys78 participates in a covalent cross-link: Glycyl lysine isopeptide (Lys-Gly) (interchain with G-Cter in SUMO2). N6-acetyllysine is present on Lys131. At Lys273 the chain carries N6-acetyllysine. Tyr283 is subject to Phosphotyrosine. Residues 310-471 (NIEIVFAKPP…GARGGRGGNV (162 aa)) form an interaction with APOBEC1 region. Arg354 carries the asymmetric dimethylarginine; by PRMT1; alternate modification. The residue at position 354 (Arg354) is an Omega-N-methylarginine; by PRMT1; alternate. 6 consecutive repeat copies span residues 358–360 (RGG), 361–363 (RGG), 370–374 (YYGYE), 379–382 (YYGY), 388–390 (RGG), and 395–398 (YYGY). The tract at residues 358-469 (RGGRGGYGYP…VRGARGGRGG (112 aa)) is 8 X 3 AA repeats of R-G-G. The 3 X 4 AA repeats of Y-Y-G-Y stretch occupies residues 370–398 (YYGYEDYYDYYGYDYHNYRGGYEDPYYGY). Arg406 bears the Omega-N-methylarginine; by PRMT1 mark. Positions 407–533 (GRGGRGARGA…YQDTFGQQWK (127 aa)) are disordered. A 1-4 repeat occupies 408-410 (RGG). Positions 414-432 (RGAAPSRGRGAAPPRGRAG) are enriched in low complexity. Arg420 is subject to Asymmetric dimethylarginine; by PRMT1. An Asymmetric dimethylarginine; by PRMT1; alternate modification is found at Arg428. Arg428 carries the omega-N-methylarginine; by PRMT1; alternate modification. The interaction with SMN stretch occupies residues 428-459 (RGRAGYSQRGGPGSARGVRGARGGAQQQRGRG). Asymmetric dimethylarginine; alternate is present on Arg436. Residue Arg436 is modified to Omega-N-methylarginine; alternate. The stretch at 436-438 (RGG) is one 1-5 repeat. Asymmetric dimethylarginine; by PRMT1; alternate occurs at positions 446 and 449. Arg446 and Arg449 each carry omega-N-methylarginine; by PRMT1; alternate. Repeat copies occupy residues 449-451 (RGG), 464-466 (RGG), and 467-469 (RGG). A compositionally biased stretch (gly residues) spans 460–472 (VRGARGGRGGNVG). The short motif at 474 to 488 (KRKADGYNQPDSKRR) is the Bipartite nuclear localization signal element. The span at 490–505 (TNNQNWGSQPIAQQPL) shows a compositional bias: polar residues. Ser497 is subject to Phosphoserine. Lys517 is covalently cross-linked (Glycyl lysine isopeptide (Lys-Gly) (interchain with G-Cter in SUMO2)).

In terms of assembly, identified in a histone pre-mRNA complex, at least composed of ERI1, LSM11, SLBP, SNRPB, SYNCRIP and YBX1. Identified in the spliceosome C complex. Component of the coding region determinant (CRD)-mediated complex, composed of DHX9, HNRNPU, IGF2BP1, SYNCRIP and YBX1. Identified in a mRNP complex, at least composed of DHX9, DDX3X, ELAVL1, HNRNPU, IGF2BP1, ILF3, PABPC1, PCBP2, PTBP2, STAU1, STAU2, SYNCRIP and YBX1. Identified in a mRNP granule complex, at least composed of ACTB, ACTN4, DHX9, ERG, HNRNPA1, HNRNPA2B1, HNRNPAB, HNRNPD, HNRNPL, HNRNPR, HNRNPU, HSPA1, HSPA8, IGF2BP1, ILF2, ILF3, NCBP1, NCL, PABPC1, PABPC4, PABPN1, RPLP0, RPS3, RPS3A, RPS4X, RPS8, RPS9, SYNCRIP, YBX1 and untranslated mRNAs. Component of the APOB mRNA editosome. Interacts with APOBEC1 and A1CF. Part of a complex associated with the FOS mCRD domain and consisting of PABPC1, PAIP1, CSDE1/UNR, HNRPD and SYNCRIP. Interacts with HNRPR, SMN, POLR2A hyperphosphorylated C-terminal domain, minute virus of mice (MVM) NS1 protein and through its C-terminal domain with SYT7, SYT8 and SYT9. The non-phosphorylated and phosphorylated forms are colocalized with PAIP1 in polysomes. Interacts with GTPBP1. Interacts with HABP4. In terms of processing, phosphorylated on tyrosine. The membrane-bound form found in microsomes is phosphorylated in vitro by insulin receptor tyrosine kinase (INSR). Phosphorylation is inhibited upon binding to RNA, whereas the cytoplasmic form is poorly phosphorylated.

It localises to the nucleus. The protein localises to the nucleoplasm. It is found in the cytoplasm. The protein resides in the microsome. Heterogenous nuclear ribonucleoprotein (hnRNP) implicated in mRNA processing mechanisms. Component of the CRD-mediated complex that promotes MYC mRNA stability. Is associated in vitro with pre-mRNA, splicing intermediates and mature mRNA protein complexes. Binds to apoB mRNA AU-rich sequences. Part of the APOB mRNA editosome complex and may modulate the postranscriptional C to U RNA-editing of the APOB mRNA through either by binding to A1CF (APOBEC1 complementation factor), to APOBEC1 or to RNA itself. May be involved in translationally coupled mRNA turnover. Implicated with other RNA-binding proteins in the cytoplasmic deadenylation/translational and decay interplay of the FOS mRNA mediated by the major coding-region determinant of instability (mCRD) domain. Interacts in vitro preferentially with poly(A) and poly(U) RNA sequences. May be involved in cytoplasmic vesicle-based mRNA transport through interaction with synaptotagmins. The sequence is that of Heterogeneous nuclear ribonucleoprotein Q (Syncrip) from Rattus norvegicus (Rat).